A 359-amino-acid chain; its full sequence is Histidinol-phosphate aminotransferase (359 aa).

K217 carries the N6-(pyridoxal phosphate)lysine modification.

It belongs to the class-II pyridoxal-phosphate-dependent aminotransferase family. Histidinol-phosphate aminotransferase subfamily. As to quaternary structure, homodimer. The cofactor is pyridoxal 5'-phosphate.

The catalysed reaction is L-histidinol phosphate + 2-oxoglutarate = 3-(imidazol-4-yl)-2-oxopropyl phosphate + L-glutamate. It participates in amino-acid biosynthesis; L-histidine biosynthesis; L-histidine from 5-phospho-alpha-D-ribose 1-diphosphate: step 7/9. The sequence is that of Histidinol-phosphate aminotransferase from Roseobacter denitrificans (strain ATCC 33942 / OCh 114) (Erythrobacter sp. (strain OCh 114)).